Reading from the N-terminus, the 301-residue chain is Probable alpha-L-glutamate ligase (301 aa).

The ATP-grasp domain occupies 104–287 (LQLLSRRGVG…IASQIIAFIE (184 aa)). Residues lysine 141, 178 to 179 (EF), aspartate 187, and 211 to 213 (RSN) contribute to the ATP site. Mg(2+) contacts are provided by aspartate 248, glutamate 260, and asparagine 262. Positions 248, 260, and 262 each coordinate Mn(2+).

This sequence belongs to the RimK family. Mg(2+) is required as a cofactor. The cofactor is Mn(2+).

This is Probable alpha-L-glutamate ligase from Hydrogenovibrio crunogenus (strain DSM 25203 / XCL-2) (Thiomicrospira crunogena).